The primary structure comprises 318 residues: tRNA-modifying protein YgfZ (318 aa).

Positions 28 and 182 each coordinate folate.

Belongs to the tRNA-modifying YgfZ family.

It is found in the cytoplasm. Folate-binding protein involved in regulating the level of ATP-DnaA and in the modification of some tRNAs. It is probably a key factor in regulatory networks that act via tRNA modification, such as initiation of chromosomal replication. The chain is tRNA-modifying protein YgfZ from Aliivibrio fischeri (strain ATCC 700601 / ES114) (Vibrio fischeri).